A 343-amino-acid chain; its full sequence is N-acetyl-gamma-glutamyl-phosphate reductase (343 aa).

Cys146 is an active-site residue.

Belongs to the NAGSA dehydrogenase family. Type 1 subfamily.

The protein localises to the cytoplasm. The enzyme catalyses N-acetyl-L-glutamate 5-semialdehyde + phosphate + NADP(+) = N-acetyl-L-glutamyl 5-phosphate + NADPH + H(+). The protein operates within amino-acid biosynthesis; L-arginine biosynthesis; N(2)-acetyl-L-ornithine from L-glutamate: step 3/4. In terms of biological role, catalyzes the NADPH-dependent reduction of N-acetyl-5-glutamyl phosphate to yield N-acetyl-L-glutamate 5-semialdehyde. This is N-acetyl-gamma-glutamyl-phosphate reductase from Acidothermus cellulolyticus (strain ATCC 43068 / DSM 8971 / 11B).